Reading from the N-terminus, the 541-residue chain is Tyrosine-protein phosphatase non-receptor type 5 (541 aa).

Positions M1–S55 are disordered. The span at M32 to E43 shows a compositional bias: pro residues. The next 2 membrane-spanning stretches (helical) occupy residues L64–H84 and L122–L142. S221 is modified (phosphoserine; by PKA). T231 is subject to Phosphothreonine; by MAPK. S244 is subject to Phosphoserine; by MAPK. The 256-residue stretch at L276–Y531 folds into the Tyrosine-protein phosphatase domain. Residues D437, C472 to R478, and Q516 each bind substrate. C472 acts as the Phosphocysteine intermediate in catalysis.

Belongs to the protein-tyrosine phosphatase family. Non-receptor class subfamily. Phosphorylation at Ser-221 by PKA deactivates PTPN5. Phosphorylation at Thr-231 and Ser-244 by MAPKs stabilizes the phosphatase, dephosphorylation of these sites results in ubiquitin-mediated degradation of the active phosphatase. As to expression, STEP20 is expressed only in the CNS.

Its subcellular location is the endoplasmic reticulum membrane. The protein localises to the cytoplasm. The enzyme catalyses O-phospho-L-tyrosyl-[protein] + H2O = L-tyrosyl-[protein] + phosphate. Functionally, may regulate the activity of several effector molecules involved in synaptic plasticity and neuronal cell survival, including MAPKs, Src family kinases and NMDA receptors. This is Tyrosine-protein phosphatase non-receptor type 5 (Ptpn5) from Mus musculus (Mouse).